Consider the following 167-residue polypeptide: Putative pre-16S rRNA nuclease (167 aa).

This sequence belongs to the YqgF nuclease family.

It is found in the cytoplasm. Functionally, could be a nuclease involved in processing of the 5'-end of pre-16S rRNA. This chain is Putative pre-16S rRNA nuclease, found in Streptomyces coelicolor (strain ATCC BAA-471 / A3(2) / M145).